The chain runs to 270 residues: MLRKVFYISDGTAITAEVFGHAVLSQFPVEFDALTIPFVETEAKAHDVKLQINDCFITTGERPLVFHSIVKAEIRDIIYSSEGLDYDFLNTFVAPLELQLGMKASPVVHRTHGKANEGYEARIDAINYTMDNDDGQTLKNIDKADLVLLGVSRCGKTPSSLYLSMQFGIKAANYPFVEDDMDNLKLPTALKENKSKLFGLTIDPVRLHEIRKSRMDNSRYSSLRQCRIEVKEVEMMYKRERIPFVNTTNHSVEEIATKILDVTGLERHMF.

Residue 150–157 (GVSRCGKT) coordinates ADP.

This sequence belongs to the pyruvate, phosphate/water dikinase regulatory protein family. PSRP subfamily.

The enzyme catalyses [pyruvate, water dikinase] + ADP = [pyruvate, water dikinase]-phosphate + AMP + H(+). It carries out the reaction [pyruvate, water dikinase]-phosphate + phosphate + H(+) = [pyruvate, water dikinase] + diphosphate. In terms of biological role, bifunctional serine/threonine kinase and phosphorylase involved in the regulation of the phosphoenolpyruvate synthase (PEPS) by catalyzing its phosphorylation/dephosphorylation. This is Putative phosphoenolpyruvate synthase regulatory protein from Shewanella sediminis (strain HAW-EB3).